The sequence spans 204 residues: Thymidine kinase (204 aa).

Residues 18 to 25 (GSMFSGKT) and 91 to 94 (DEGQ) contribute to the ATP site. The Proton acceptor role is filled by Glu-92. Residues Cys-148, Cys-151, Cys-180, and His-183 each contribute to the Zn(2+) site.

Belongs to the thymidine kinase family. As to quaternary structure, homotetramer.

Its subcellular location is the cytoplasm. The enzyme catalyses thymidine + ATP = dTMP + ADP + H(+). In Bdellovibrio bacteriovorus (strain ATCC 15356 / DSM 50701 / NCIMB 9529 / HD100), this protein is Thymidine kinase.